Reading from the N-terminus, the 361-residue chain is 3-dehydroquinate synthase (361 aa).

Residues 105–109 (GVIGD), 129–130 (TT), K142, K151, and 169–172 (FLST) contribute to the NAD(+) site. Zn(2+) contacts are provided by E184, H247, and H264.

The protein belongs to the sugar phosphate cyclases superfamily. Dehydroquinate synthase family. Co(2+) serves as cofactor. It depends on Zn(2+) as a cofactor. NAD(+) is required as a cofactor.

It localises to the cytoplasm. The enzyme catalyses 7-phospho-2-dehydro-3-deoxy-D-arabino-heptonate = 3-dehydroquinate + phosphate. Its pathway is metabolic intermediate biosynthesis; chorismate biosynthesis; chorismate from D-erythrose 4-phosphate and phosphoenolpyruvate: step 2/7. Catalyzes the conversion of 3-deoxy-D-arabino-heptulosonate 7-phosphate (DAHP) to dehydroquinate (DHQ). The chain is 3-dehydroquinate synthase from Endomicrobium trichonymphae.